A 436-amino-acid chain; its full sequence is Adenosylmethionine-8-amino-7-oxononanoate aminotransferase (436 aa).

Residue W56 coordinates substrate. 114 to 115 is a pyridoxal 5'-phosphate binding site; that stretch reads GS. Position 148 (Y148) interacts with substrate. Residue D245 participates in pyridoxal 5'-phosphate binding. Residues K274, S309, and R400 each contribute to the substrate site. The residue at position 274 (K274) is an N6-(pyridoxal phosphate)lysine.

Belongs to the class-III pyridoxal-phosphate-dependent aminotransferase family. BioA subfamily. Homodimer. Pyridoxal 5'-phosphate serves as cofactor.

It is found in the cytoplasm. The catalysed reaction is (8S)-8-amino-7-oxononanoate + S-adenosyl-L-methionine = S-adenosyl-4-methylsulfanyl-2-oxobutanoate + (7R,8S)-7,8-diammoniononanoate. The protein operates within cofactor biosynthesis; biotin biosynthesis; 7,8-diaminononanoate from 8-amino-7-oxononanoate (SAM route): step 1/1. Functionally, catalyzes the transfer of the alpha-amino group from S-adenosyl-L-methionine (SAM) to 7-keto-8-aminopelargonic acid (KAPA) to form 7,8-diaminopelargonic acid (DAPA). It is the only aminotransferase known to utilize SAM as an amino donor. In Helicobacter pylori (strain ATCC 700392 / 26695) (Campylobacter pylori), this protein is Adenosylmethionine-8-amino-7-oxononanoate aminotransferase.